Consider the following 1302-residue polypeptide: 1-phosphatidylinositol 4,5-bisphosphate phosphodiesterase gamma-1 (1302 aa).

An N-acetylalanine modification is found at A2. One can recognise a PH 1 domain in the interval 27–142; it reads RSLEVGTVMT…WIKGLTWLME (116 aa). In terms of domain architecture, EF-hand spans 152–187; that stretch reads QIERWLRKQFYSVDRNREDRISAKDLKNMLSQVNYR. Ca(2+) contacts are provided by D165, N167, E169, R171, and D176. In terms of domain architecture, PI-PLC X-box spans 320–464; sequence DTMNNPLSHY…LRRKILIKHK (145 aa). Residues H335 and H380 contribute to the active site. The 35-residue stretch at 489–523 folds into the PH 2; first part domain; that stretch reads SIKNGILYLEDPVNHEWYPHYFVLTSSKIYYSEET. A Phosphotyrosine modification is found at Y506. A disordered region spans residues 522–545; it reads ETSSDQGNEDEEEPKEASSSTELH. SH2 domains are found at residues 550–657 and 668–756; these read WFHG…SEPV and WYHA…RYPI. Phosphotyrosine; by SYK is present on Y771. A Phosphotyrosine modification is found at Y775. Residue Y783 is modified to Phosphotyrosine; by ITK, SYK and TXK. The 61-residue stretch at 791–851 folds into the SH3 domain; the sequence is TFKCAVKALF…PSNYVEEMIN (61 aa). The PH 2; second part domain occupies 895–931; it reads FVFSISMPSVAQWSLDVAADSQEELQDWVKKIREVAQ. Residues 953–1070 form the PI-PLC Y-box domain; that stretch reads LSELVVYCRP…GYVLQPSTMR (118 aa). Y977 is modified (phosphotyrosine). Residues 1071–1194 form the C2 domain; that stretch reads DEAFDPFDKS…TGYRAVPLKN (124 aa). Residues S1221, S1227, S1233, and S1248 each carry the phosphoserine modification. A Phosphotyrosine modification is found at Y1253. The residue at position 1263 (S1263) is a Phosphoserine.

As to quaternary structure, interacts (via SH2 domain) with FGFR1, FGFR2, FGFR3 and FGFR4 (phosphorylated). Interacts with RALGPS1. Interacts (via SH2 domains) with VIL1 (phosphorylated at C-terminus tyrosine phosphorylation sites). Interacts (via SH2 domain) with RET. Interacts with AGAP2 via its SH3 domain. Interacts with LAT (phosphorylated) upon TCR activation. Interacts (via SH3 domain) with the Pro-rich domain of TNK1. Associates with BLNK, VAV1, GRB2 and NCK1 in a B-cell antigen receptor-dependent fashion. Interacts with CBLB in activated T-cells; which inhibits phosphorylation. Interacts with SHB. Interacts (via SH3 domain) with the Arg/Gly-rich-flanked Pro-rich domains of KHDRBS1/SAM68. This interaction is selectively regulated by arginine methylation of KHDRBS1/SAM68. Interacts with INPP5D/SHIP1, THEMIS and CLNK. Interacts with FLT4 and KIT. Interacts with AXL. Interacts with SYK; activates PLCG1. Interacts with FLT1 (tyrosine-phosphorylated). Interacts (via SH2 domain) with PDGFRA and PDGFRB (tyrosine phosphorylated). Interacts with PIP5K1C. Interacts with NTRK1 and NTRK2 (phosphorylated upon ligand-binding). Interacts with TESPA1. Interacts with GRB2, LAT and THEMIS upon TCR activation in thymocytes; the association is weaker in the absence of TESPA1. Interacts (via C-terminal proline-rich domain (PRD)) with PLCG1 (via SH3 domain); this interaction leads to guanine nucleotide exchange from PlCG1 to DNM1 and enhances DNM1-dependent endocytosis. Requires Ca(2+) as cofactor. In terms of processing, tyrosine phosphorylated in response to signaling via activated FLT3, KIT and PDGFRA. Tyrosine phosphorylated by activated FGFR1, FGFR2, FGFR3 and FGFR4. Tyrosine phosphorylated by activated FLT1 and KDR. Tyrosine phosphorylated by activated PDGFRB. The receptor-mediated activation of PLCG1 involves its phosphorylation by tyrosine kinases in response to ligation of a variety of growth factor receptors and immune system receptors. For instance, SYK phosphorylates and activates PLCG1 in response to ligation of the B-cell receptor. Phosphorylated by ITK and TXK on Tyr-783 upon TCR activation in T-cells. May be dephosphorylated by PTPRJ. Ubiquitinated by CBLB in activated T-cells.

Its subcellular location is the cell projection. It localises to the lamellipodium. It is found in the ruffle. It catalyses the reaction a 1,2-diacyl-sn-glycero-3-phospho-(1D-myo-inositol-4,5-bisphosphate) + H2O = 1D-myo-inositol 1,4,5-trisphosphate + a 1,2-diacyl-sn-glycerol + H(+). The enzyme catalyses a 1,2-diacyl-sn-glycero-3-phospho-(1D-myo-inositol) + H2O = 1D-myo-inositol 1-phosphate + a 1,2-diacyl-sn-glycerol + H(+). With respect to regulation, activated by phosphorylation on tyrosine residues. Its function is as follows. Mediates the production of the second messenger molecules diacylglycerol (DAG) and inositol 1,4,5-trisphosphate (IP3). Plays an important role in the regulation of intracellular signaling cascades. Becomes activated in response to ligand-mediated activation of receptor-type tyrosine kinases, such as PDGFRA, PDGFRB, EGFR, FGFR1, FGFR2, FGFR3 and FGFR4. Plays a role in actin reorganization and cell migration. Guanine nucleotide exchange factor that binds the GTPase DNM1 and catalyzes the dissociation of GDP, allowing a GTP molecule to bind in its place, therefore enhancing DNM1-dependent endocytosis. The protein is 1-phosphatidylinositol 4,5-bisphosphate phosphodiesterase gamma-1 of Mus musculus (Mouse).